Consider the following 915-residue polypeptide: Isoleucine--tRNA ligase (915 aa).

The short motif at 58–68 (PYANGHLHIGH) is the 'HIGH' region element. Glu568 contacts L-isoleucyl-5'-AMP. The short motif at 609 to 613 (KMSKS) is the 'KMSKS' region element. ATP is bound at residue Lys612. Cys892, Cys895, Cys907, and Cys910 together coordinate Zn(2+).

The protein belongs to the class-I aminoacyl-tRNA synthetase family. IleS type 1 subfamily. Monomer. It depends on Zn(2+) as a cofactor.

The protein localises to the cytoplasm. The catalysed reaction is tRNA(Ile) + L-isoleucine + ATP = L-isoleucyl-tRNA(Ile) + AMP + diphosphate. Catalyzes the attachment of isoleucine to tRNA(Ile). As IleRS can inadvertently accommodate and process structurally similar amino acids such as valine, to avoid such errors it has two additional distinct tRNA(Ile)-dependent editing activities. One activity is designated as 'pretransfer' editing and involves the hydrolysis of activated Val-AMP. The other activity is designated 'posttransfer' editing and involves deacylation of mischarged Val-tRNA(Ile). The chain is Isoleucine--tRNA ligase from Wolinella succinogenes (strain ATCC 29543 / DSM 1740 / CCUG 13145 / JCM 31913 / LMG 7466 / NCTC 11488 / FDC 602W) (Vibrio succinogenes).